Reading from the N-terminus, the 359-residue chain is Tropomodulin-1 (359 aa).

A disordered region spans residues 36–61; it reads ELDPDNALLPAGLRQKDQTTKAPTGP. The segment at 39–138 is tropomyosin-binding; that stretch reads PDNALLPAGL…CDIAAILGMH (100 aa).

Belongs to the tropomodulin family. Binds to the N-terminus of tropomyosin and to actin. Interacts with FLII. In terms of tissue distribution, highly expressed in the erythrocyte, heart and skeletal muscle.

It is found in the cytoplasm. The protein localises to the cytoskeleton. Blocks the elongation and depolymerization of the actin filaments at the pointed end. The Tmod/TM complex contributes to the formation of the short actin protofilament, which in turn defines the geometry of the membrane skeleton. May play an important role in regulating the organization of actin filaments by preferentially binding to a specific tropomyosin isoform at its N-terminus. In Homo sapiens (Human), this protein is Tropomodulin-1 (TMOD1).